A 321-amino-acid chain; its full sequence is Fimbria adhesin protein (321 aa).

A signal peptide spans 1-18 (MKKLTLFIGLMALGTTSA).

It belongs to the fimbrial protein family.

It localises to the fimbrium. This is Fimbria adhesin protein (mrkD) from Klebsiella pneumoniae.